We begin with the raw amino-acid sequence, 127 residues long: Holo-[acyl-carrier-protein] synthase (127 aa).

Mg(2+) contacts are provided by aspartate 8 and glutamate 56.

This sequence belongs to the P-Pant transferase superfamily. AcpS family. Requires Mg(2+) as cofactor.

The protein localises to the cytoplasm. The catalysed reaction is apo-[ACP] + CoA = holo-[ACP] + adenosine 3',5'-bisphosphate + H(+). Functionally, transfers the 4'-phosphopantetheine moiety from coenzyme A to a Ser of acyl-carrier-protein. The protein is Holo-[acyl-carrier-protein] synthase of Cytophaga hutchinsonii (strain ATCC 33406 / DSM 1761 / CIP 103989 / NBRC 15051 / NCIMB 9469 / D465).